We begin with the raw amino-acid sequence, 219 residues long: Guanylate kinase (219 aa).

The Guanylate kinase-like domain maps to 15-194 (GLMFVLSSPS…AFESVKAILR (180 aa)). 22–29 (SPSGAGKT) serves as a coordination point for ATP.

This sequence belongs to the guanylate kinase family.

It localises to the cytoplasm. The enzyme catalyses GMP + ATP = GDP + ADP. In terms of biological role, essential for recycling GMP and indirectly, cGMP. In Rhodopseudomonas palustris (strain BisB5), this protein is Guanylate kinase.